The primary structure comprises 40 residues: Unknown protein from spot 207 of 2D-PAGE of etiolated coleoptile (40 aa).

Belongs to the GST superfamily. HSP26 family.

The protein is Unknown protein from spot 207 of 2D-PAGE of etiolated coleoptile of Zea mays (Maize).